Here is a 185-residue protein sequence, read N- to C-terminus: Kunitz-type serine protease inhibitor DrTI (185 aa).

Cystine bridges form between Cys-44/Cys-89 and Cys-139/Cys-147.

The protein belongs to the protease inhibitor I3 (leguminous Kunitz-type inhibitor) family.

The protein localises to the secreted. Its function is as follows. Inhibits bovine trypsin and human plasma kallikrein. This Delonix regia (Royal poinciana) protein is Kunitz-type serine protease inhibitor DrTI.